A 274-amino-acid polypeptide reads, in one-letter code: Rhamnulose-1-phosphate aldolase (274 aa).

The active site involves Glu-117. 3 residues coordinate Zn(2+): His-141, His-143, and His-212.

This sequence belongs to the aldolase class II family. RhaD subfamily. As to quaternary structure, homotetramer. It depends on Zn(2+) as a cofactor.

It is found in the cytoplasm. The catalysed reaction is L-rhamnulose 1-phosphate = (S)-lactaldehyde + dihydroxyacetone phosphate. The protein operates within carbohydrate degradation; L-rhamnose degradation; glycerone phosphate from L-rhamnose: step 3/3. Catalyzes the reversible cleavage of L-rhamnulose-1-phosphate to dihydroxyacetone phosphate (DHAP) and L-lactaldehyde. This Escherichia coli O127:H6 (strain E2348/69 / EPEC) protein is Rhamnulose-1-phosphate aldolase.